Here is a 78-residue protein sequence, read N- to C-terminus: Toxin OAIP 5 (78 aa).

The signal sequence occupies residues Met-1 to Ala-19. A propeptide spanning residues Glu-20–Arg-40 is cleaved from the precursor. Cystine bridges form between Cys-43–Cys-56, Cys-47–Cys-70, and Cys-64–Cys-75.

This sequence belongs to the neurotoxin 12 (Hwtx-2) family. 05 (OAIP-5) subfamily. In terms of tissue distribution, expressed by the venom gland.

The protein localises to the secreted. Functionally, probable ion channel inhibitor. Shows insecticidal activity when injected into mealworms. This is Toxin OAIP 5 from Selenotypus plumipes (Australian featherleg tarantula).